A 317-amino-acid chain; its full sequence is Ribosomal protein L11 methyltransferase (317 aa).

S-adenosyl-L-methionine contacts are provided by Thr162, Gly183, Asp205, and Asn248.

Belongs to the methyltransferase superfamily. PrmA family.

It localises to the cytoplasm. It carries out the reaction L-lysyl-[protein] + 3 S-adenosyl-L-methionine = N(6),N(6),N(6)-trimethyl-L-lysyl-[protein] + 3 S-adenosyl-L-homocysteine + 3 H(+). Its function is as follows. Methylates ribosomal protein L11. The sequence is that of Ribosomal protein L11 methyltransferase from Alkaliphilus metalliredigens (strain QYMF).